A 138-amino-acid chain; its full sequence is Peptide methionine sulfoxide reductase MsrB (138 aa).

The MsrB domain occupies E15–R137. C54, C57, C103, and C106 together coordinate Zn(2+). The active-site Nucleophile is the C126.

This sequence belongs to the MsrB Met sulfoxide reductase family. Requires Zn(2+) as cofactor.

It catalyses the reaction L-methionyl-[protein] + [thioredoxin]-disulfide + H2O = L-methionyl-(R)-S-oxide-[protein] + [thioredoxin]-dithiol. The protein is Peptide methionine sulfoxide reductase MsrB of Methylibium petroleiphilum (strain ATCC BAA-1232 / LMG 22953 / PM1).